We begin with the raw amino-acid sequence, 250 residues long: Ubiquinone/menaquinone biosynthesis C-methyltransferase UbiE (250 aa).

Residues threonine 74, aspartate 94, 122 to 123 (DA), and serine 139 contribute to the S-adenosyl-L-methionine site.

The protein belongs to the class I-like SAM-binding methyltransferase superfamily. MenG/UbiE family.

It catalyses the reaction a 2-demethylmenaquinol + S-adenosyl-L-methionine = a menaquinol + S-adenosyl-L-homocysteine + H(+). The catalysed reaction is a 2-methoxy-6-(all-trans-polyprenyl)benzene-1,4-diol + S-adenosyl-L-methionine = a 5-methoxy-2-methyl-3-(all-trans-polyprenyl)benzene-1,4-diol + S-adenosyl-L-homocysteine + H(+). It functions in the pathway quinol/quinone metabolism; menaquinone biosynthesis; menaquinol from 1,4-dihydroxy-2-naphthoate: step 2/2. It participates in cofactor biosynthesis; ubiquinone biosynthesis. Functionally, methyltransferase required for the conversion of demethylmenaquinol (DMKH2) to menaquinol (MKH2) and the conversion of 2-polyprenyl-6-methoxy-1,4-benzoquinol (DDMQH2) to 2-polyprenyl-3-methyl-6-methoxy-1,4-benzoquinol (DMQH2). The polypeptide is Ubiquinone/menaquinone biosynthesis C-methyltransferase UbiE (Dinoroseobacter shibae (strain DSM 16493 / NCIMB 14021 / DFL 12)).